A 161-amino-acid chain; its full sequence is Putative TRAP transporter small permease protein HI_1030 (161 aa).

The next 4 helical transmembrane spans lie at 13-33, 51-71, 86-106, and 135-155; these read LEILCISILALMSILVFLNVV, YLFIWLAFLGAVLAFNENQHV, AILKFITDMMMLICCYLIIEG, and IAGILVSAILITRLISTIFFI.

The protein belongs to the TRAP transporter small permease family.

It localises to the cell inner membrane. In Haemophilus influenzae (strain ATCC 51907 / DSM 11121 / KW20 / Rd), this protein is Putative TRAP transporter small permease protein HI_1030.